Reading from the N-terminus, the 40-residue chain is Photosystem II reaction center protein J (40 aa).

Residues 8 to 28 (IPLWLVGTVTGIPVIGLIGVF) form a helical membrane-spanning segment.

It belongs to the PsbJ family. PSII is composed of 1 copy each of membrane proteins PsbA, PsbB, PsbC, PsbD, PsbE, PsbF, PsbH, PsbI, PsbJ, PsbK, PsbL, PsbM, PsbT, PsbX, PsbY, PsbZ, Psb30/Ycf12, at least 3 peripheral proteins of the oxygen-evolving complex and a large number of cofactors. It forms dimeric complexes.

It is found in the plastid. It localises to the chloroplast thylakoid membrane. Its function is as follows. One of the components of the core complex of photosystem II (PSII). PSII is a light-driven water:plastoquinone oxidoreductase that uses light energy to abstract electrons from H(2)O, generating O(2) and a proton gradient subsequently used for ATP formation. It consists of a core antenna complex that captures photons, and an electron transfer chain that converts photonic excitation into a charge separation. The polypeptide is Photosystem II reaction center protein J (Musa acuminata (Banana)).